The following is a 319-amino-acid chain: tRNA-cytidine(32) 2-sulfurtransferase (319 aa).

The short motif at 49–54 (SGGKDS) is the PP-loop motif element. 3 residues coordinate [4Fe-4S] cluster: cysteine 124, cysteine 127, and cysteine 215. A disordered region spans residues 276–319 (DGDTAFDKEEFRDPAPDADDVEDAPKKRTISILDSRGKESGCGA). Composition is skewed to basic and acidic residues over residues 280 to 290 (AFDKEEFRDPA) and 310 to 319 (SRGKESGCGA).

Belongs to the TtcA family. As to quaternary structure, homodimer. Mg(2+) is required as a cofactor. Requires [4Fe-4S] cluster as cofactor.

Its subcellular location is the cytoplasm. It catalyses the reaction cytidine(32) in tRNA + S-sulfanyl-L-cysteinyl-[cysteine desulfurase] + AH2 + ATP = 2-thiocytidine(32) in tRNA + L-cysteinyl-[cysteine desulfurase] + A + AMP + diphosphate + H(+). It participates in tRNA modification. In terms of biological role, catalyzes the ATP-dependent 2-thiolation of cytidine in position 32 of tRNA, to form 2-thiocytidine (s(2)C32). The sulfur atoms are provided by the cysteine/cysteine desulfurase (IscS) system. This chain is tRNA-cytidine(32) 2-sulfurtransferase, found in Chromobacterium violaceum (strain ATCC 12472 / DSM 30191 / JCM 1249 / CCUG 213 / NBRC 12614 / NCIMB 9131 / NCTC 9757 / MK).